Consider the following 157-residue polypeptide: Large ribosomal subunit protein uL11 (157 aa).

The protein belongs to the universal ribosomal protein uL11 family. In terms of assembly, part of the ribosomal stalk of the 50S ribosomal subunit. Interacts with L10 and the large rRNA to form the base of the stalk. L10 forms an elongated spine to which L12 dimers bind in a sequential fashion forming a multimeric L10(L12)X complex.

Its function is as follows. Forms part of the ribosomal stalk which helps the ribosome interact with GTP-bound translation factors. In Methanocorpusculum labreanum (strain ATCC 43576 / DSM 4855 / Z), this protein is Large ribosomal subunit protein uL11.